Consider the following 164-residue polypeptide: Protein-export protein SecB (164 aa).

It belongs to the SecB family. Homotetramer, a dimer of dimers. One homotetramer interacts with 1 SecA dimer.

Its subcellular location is the cytoplasm. Functionally, one of the proteins required for the normal export of preproteins out of the cell cytoplasm. It is a molecular chaperone that binds to a subset of precursor proteins, maintaining them in a translocation-competent state. It also specifically binds to its receptor SecA. This chain is Protein-export protein SecB, found in Herminiimonas arsenicoxydans.